A 274-amino-acid polypeptide reads, in one-letter code: MRRYLFMVLALCLYRAAPLEAVVIKITDAQAVLKFAREKTLVCFNIEDTVVFPKQMVGQSAWLYNRELDLKTTLSEEQAREQAFLEWMGISFLVDYELVSANLRNVLTGLSLKRSWVLGISQRPVHLIKNTLRILRSFNIDFTSCPAICEDGWLSHPTKDTTFDQAMAIEKNILFVGSLKNGQPMDAALEVLLSGISSPPSQIIYVDQDAERLRSIGAFCKKANIYFIGMLYTPAKQRVESYNPKLTAIQWSQIRKNLSDEYYESLLSYVKSKG.

A signal peptide spans 1-21 (MRRYLFMVLALCLYRAAPLEA).

It localises to the cell outer membrane. The sequence is that of Putative outer membrane protein CPn_1073/CP_0776/CPj1073/CpB1118 from Chlamydia pneumoniae (Chlamydophila pneumoniae).